The primary structure comprises 320 residues: Cytochrome f (320 aa).

A signal peptide spans methionine 1 to alanine 35. Tyrosine 36, cysteine 56, cysteine 59, and histidine 60 together coordinate heme. Residues valine 286–lysine 306 form a helical membrane-spanning segment.

It belongs to the cytochrome f family. The 4 large subunits of the cytochrome b6-f complex are cytochrome b6, subunit IV (17 kDa polypeptide, petD), cytochrome f and the Rieske protein, while the 4 small subunits are PetG, PetL, PetM and PetN. The complex functions as a dimer. The cofactor is heme.

It localises to the plastid. Its subcellular location is the chloroplast thylakoid membrane. In terms of biological role, component of the cytochrome b6-f complex, which mediates electron transfer between photosystem II (PSII) and photosystem I (PSI), cyclic electron flow around PSI, and state transitions. The chain is Cytochrome f from Citrus sinensis (Sweet orange).